A 236-amino-acid polypeptide reads, in one-letter code: 7-cyano-7-deazaguanine synthase (236 aa).

Residue 7–17 coordinates ATP; sequence CSGGLDSVSLA. Residues C185, C193, C196, and C199 each coordinate Zn(2+).

This sequence belongs to the QueC family. It depends on Zn(2+) as a cofactor.

The enzyme catalyses 7-carboxy-7-deazaguanine + NH4(+) + ATP = 7-cyano-7-deazaguanine + ADP + phosphate + H2O + H(+). It functions in the pathway purine metabolism; 7-cyano-7-deazaguanine biosynthesis. Catalyzes the ATP-dependent conversion of 7-carboxy-7-deazaguanine (CDG) to 7-cyano-7-deazaguanine (preQ(0)). This chain is 7-cyano-7-deazaguanine synthase, found in Rhizobium rhizogenes (strain K84 / ATCC BAA-868) (Agrobacterium radiobacter).